The primary structure comprises 342 residues: tRNA N6-adenosine threonylcarbamoyltransferase (342 aa).

Fe cation contacts are provided by histidine 114 and histidine 118. Substrate is bound by residues 136–140 (LVSGG), aspartate 169, glycine 182, aspartate 186, and asparagine 275. Position 301 (aspartate 301) interacts with Fe cation.

This sequence belongs to the KAE1 / TsaD family. Fe(2+) is required as a cofactor.

The protein localises to the cytoplasm. The enzyme catalyses L-threonylcarbamoyladenylate + adenosine(37) in tRNA = N(6)-L-threonylcarbamoyladenosine(37) in tRNA + AMP + H(+). Required for the formation of a threonylcarbamoyl group on adenosine at position 37 (t(6)A37) in tRNAs that read codons beginning with adenine. Is involved in the transfer of the threonylcarbamoyl moiety of threonylcarbamoyl-AMP (TC-AMP) to the N6 group of A37, together with TsaE and TsaB. TsaD likely plays a direct catalytic role in this reaction. The chain is tRNA N6-adenosine threonylcarbamoyltransferase from Streptococcus pyogenes serotype M2 (strain MGAS10270).